A 183-amino-acid chain; its full sequence is Gamma-crystallin N-A (183 aa).

4 Beta/gamma crystallin 'Greek key' domains span residues 6–46, 47–89, 95–136, and 138–180; these read GKIV…RVES, GAWV…KPIK, YRME…KVYG, and GAWA…RRVV.

It belongs to the beta/gamma-crystallin family. As to quaternary structure, monomer.

Its function is as follows. Crystallins are the dominant structural components of the vertebrate eye lens. The polypeptide is Gamma-crystallin N-A (crygna) (Danio rerio (Zebrafish)).